Consider the following 654-residue polypeptide: Glutamyl-tRNA(Gln) amidotransferase subunit B, mitochondrial (654 aa).

Residues 1–8 (MGRIPTRE) constitute a mitochondrion transit peptide. A disordered region spans residues 79 to 101 (DQAKASKAQAKGKKKRSSADNQT).

The protein belongs to the GatB/GatE family. GatB subfamily. Subunit of the heterotrimeric GatCAB amidotransferase (AdT) complex, composed of A, B and C subunits.

The protein localises to the mitochondrion. The enzyme catalyses L-glutamyl-tRNA(Gln) + L-glutamine + ATP + H2O = L-glutaminyl-tRNA(Gln) + L-glutamate + ADP + phosphate + H(+). Functionally, allows the formation of correctly charged Gln-tRNA(Gln) through the transamidation of misacylated Glu-tRNA(Gln) in the mitochondria. The reaction takes place in the presence of glutamine and ATP through an activated gamma-phospho-Glu-tRNA(Gln). In Pyricularia oryzae (strain 70-15 / ATCC MYA-4617 / FGSC 8958) (Rice blast fungus), this protein is Glutamyl-tRNA(Gln) amidotransferase subunit B, mitochondrial.